The following is a 257-amino-acid chain: V-type proton ATPase subunit D (257 aa).

The segment at 215–257 (KEQEAAQKALEGPGPGEDAAHSENNPPRNLLASEEDNLPVLFN) is disordered.

The protein belongs to the V-ATPase D subunit family. As to quaternary structure, V-ATPase is a heteromultimeric enzyme made up of two complexes: the ATP-hydrolytic V1 complex and the proton translocation V0 complex. The V1 complex consists of three catalytic AB heterodimers that form a heterohexamer, three peripheral stalks each consisting of EG heterodimers, one central rotor including subunits D and F, and the regulatory subunits C and H. The proton translocation complex V0 consists of the proton transport subunit a, a ring of proteolipid subunits c9c'', rotary subunit d, subunits e and f, and the accessory subunits vah-19/Ac45 and vah-20/PRR.

Subunit of the V1 complex of vacuolar(H+)-ATPase (V-ATPase), a multisubunit enzyme composed of a peripheral complex (V1) that hydrolyzes ATP and a membrane integral complex (V0) that translocates protons. V-ATPase is responsible for acidifying and maintaining the pH of intracellular compartments and in some cell types, is targeted to the plasma membrane, where it is responsible for acidifying the extracellular environment. In Caenorhabditis elegans, this protein is V-type proton ATPase subunit D.